Consider the following 251-residue polypeptide: MSEGESKSTHFGYKTVEADKKADLVAGVFHSVAAKYDIMNDVMSFGIHRFWKRYTIEVSGARPGMKVLDLAGGTGDLTAKFSHLVGDKGEVVLADINDSMLKVGRTKLRDRGIVSNVSYVQANAEALPFPDNHFDIITIAFGLRNVTDKDAALRSMNRVLKPGGKLLVLEFSKPQHEVMRKVYDLYSFKVLPKMGQLITKDADSYEYLAESIRMHPDQDTLKQMMVDAGFEQVDYTNMTDGIVALHRGYKF.

S-adenosyl-L-methionine is bound by residues T74, D95, and 123–124 (NA).

The protein belongs to the class I-like SAM-binding methyltransferase superfamily. MenG/UbiE family.

The catalysed reaction is a 2-demethylmenaquinol + S-adenosyl-L-methionine = a menaquinol + S-adenosyl-L-homocysteine + H(+). The enzyme catalyses a 2-methoxy-6-(all-trans-polyprenyl)benzene-1,4-diol + S-adenosyl-L-methionine = a 5-methoxy-2-methyl-3-(all-trans-polyprenyl)benzene-1,4-diol + S-adenosyl-L-homocysteine + H(+). It functions in the pathway quinol/quinone metabolism; menaquinone biosynthesis; menaquinol from 1,4-dihydroxy-2-naphthoate: step 2/2. The protein operates within cofactor biosynthesis; ubiquinone biosynthesis. Methyltransferase required for the conversion of demethylmenaquinol (DMKH2) to menaquinol (MKH2) and the conversion of 2-polyprenyl-6-methoxy-1,4-benzoquinol (DDMQH2) to 2-polyprenyl-3-methyl-6-methoxy-1,4-benzoquinol (DMQH2). The sequence is that of Ubiquinone/menaquinone biosynthesis C-methyltransferase UbiE from Shewanella oneidensis (strain ATCC 700550 / JCM 31522 / CIP 106686 / LMG 19005 / NCIMB 14063 / MR-1).